A 282-amino-acid polypeptide reads, in one-letter code: 4-hydroxybenzoate octaprenyltransferase (282 aa).

A run of 9 helical transmembrane segments spans residues 17–37, 40–60, 90–110, 113–133, 135–155, 163–183, 207–227, 231–251, and 262–282; these read IGIL…NQGF, IDLL…GCVI, AFIL…KLPI, FYFA…KRFL, APQL…FIAS, FIVL…MYAM, LIIA…AINK, WFFY…LKLI, and AFLV…LALI.

The protein belongs to the UbiA prenyltransferase family. Mg(2+) serves as cofactor.

Its subcellular location is the cell inner membrane. It carries out the reaction all-trans-octaprenyl diphosphate + 4-hydroxybenzoate = 4-hydroxy-3-(all-trans-octaprenyl)benzoate + diphosphate. The protein operates within cofactor biosynthesis; ubiquinone biosynthesis. Its function is as follows. Catalyzes the prenylation of para-hydroxybenzoate (PHB) with an all-trans polyprenyl group. Mediates the second step in the final reaction sequence of ubiquinone-8 (UQ-8) biosynthesis, which is the condensation of the polyisoprenoid side chain with PHB, generating the first membrane-bound Q intermediate 3-octaprenyl-4-hydroxybenzoate. This is 4-hydroxybenzoate octaprenyltransferase from Legionella pneumophila subsp. pneumophila (strain Philadelphia 1 / ATCC 33152 / DSM 7513).